Consider the following 207-residue polypeptide: Ribonuclease HII (207 aa).

Residues 12–201 (DLVAGVDEVG…VRAAWEAREG (190 aa)) form the RNase H type-2 domain. Positions 18, 19, and 110 each coordinate a divalent metal cation.

Belongs to the RNase HII family. Mn(2+) is required as a cofactor. It depends on Mg(2+) as a cofactor.

The protein localises to the cytoplasm. The catalysed reaction is Endonucleolytic cleavage to 5'-phosphomonoester.. Endonuclease that specifically degrades the RNA of RNA-DNA hybrids. This chain is Ribonuclease HII, found in Pseudomonas putida (strain GB-1).